A 420-amino-acid polypeptide reads, in one-letter code: Glucose-1-phosphate adenylyltransferase (420 aa).

Residues Tyr107, Gly172, 187–188 (EK), and Ser205 contribute to the alpha-D-glucose 1-phosphate site.

Belongs to the bacterial/plant glucose-1-phosphate adenylyltransferase family. In terms of assembly, homotetramer.

The catalysed reaction is alpha-D-glucose 1-phosphate + ATP + H(+) = ADP-alpha-D-glucose + diphosphate. Its pathway is glycan biosynthesis; glycogen biosynthesis. In terms of biological role, involved in the biosynthesis of ADP-glucose, a building block required for the elongation reactions to produce glycogen. Catalyzes the reaction between ATP and alpha-D-glucose 1-phosphate (G1P) to produce pyrophosphate and ADP-Glc. This chain is Glucose-1-phosphate adenylyltransferase, found in Rhizobium etli (strain ATCC 51251 / DSM 11541 / JCM 21823 / NBRC 15573 / CFN 42).